Here is a 203-residue protein sequence, read N- to C-terminus: Urease accessory protein UreG (203 aa).

14–21 (GPVGSGKT) serves as a coordination point for GTP.

The protein belongs to the SIMIBI class G3E GTPase family. UreG subfamily. Homodimer. UreD, UreF and UreG form a complex that acts as a GTP-hydrolysis-dependent molecular chaperone, activating the urease apoprotein by helping to assemble the nickel containing metallocenter of UreC. The UreE protein probably delivers the nickel.

Its subcellular location is the cytoplasm. In terms of biological role, facilitates the functional incorporation of the urease nickel metallocenter. This process requires GTP hydrolysis, probably effectuated by UreG. In Allorhizobium ampelinum (strain ATCC BAA-846 / DSM 112012 / S4) (Agrobacterium vitis (strain S4)), this protein is Urease accessory protein UreG.